A 226-amino-acid polypeptide reads, in one-letter code: MINSIQWEYIFNTKLAIESFPYVIKGIGYTLLISFVSMFAGTVIGLFISLARMSKLALLRWPAKLYISFMRGVPILVILFILYFGFPYIGIEFSAVTAALIGFSLNSAAYIAEINRSAISSVEKGQWEAASSLGLSYWQTMRGIILPQSIRIALPPLANVLLDLIKASSLAAMITVPELLQHAKIIGGREFDYMTMYILTALIYWAICSIAAVFQNILEKKYAHYV.

One can recognise an ABC transmembrane type-1 domain in the interval 27 to 215 (IGYTLLISFV…AICSIAAVFQ (189 aa)). 5 consecutive transmembrane segments (helical) span residues 31-51 (LLIS…ISLA), 73-93 (VPIL…GIEF), 94-114 (SAVT…IAEI), 160-180 (VLLD…PELL), and 194-214 (MTMY…AAVF).

Belongs to the binding-protein-dependent transport system permease family. HisMQ subfamily.

It localises to the cell membrane. In terms of biological role, part of a binding-protein-dependent transport system. Probably responsible for the translocation of the substrate across the membrane. This chain is Probable amino-acid ABC transporter permease protein YckA (yckA), found in Bacillus subtilis (strain 168).